We begin with the raw amino-acid sequence, 422 residues long: Isocitrate dehydrogenase [NADP] (422 aa).

An NADP(+)-binding site is contributed by Thr-94. Residues Ser-103, Asn-105, Arg-109, Arg-119, and Arg-143 each contribute to the D-threo-isocitrate site. Asp-310 contributes to the Mg(2+) binding site. NADP(+) is bound by residues 344 to 350, Asn-357, Tyr-396, and Arg-400; that span reads HGTAPKY.

The protein belongs to the isocitrate and isopropylmalate dehydrogenases family. Homodimer. It depends on Mg(2+) as a cofactor. The cofactor is Mn(2+).

It carries out the reaction D-threo-isocitrate + NADP(+) = 2-oxoglutarate + CO2 + NADPH. Catalyzes the oxidative decarboxylation of isocitrate to 2-oxoglutarate and carbon dioxide with the concomitant reduction of NADP(+). This Staphylococcus aureus (strain COL) protein is Isocitrate dehydrogenase [NADP] (icd).